The chain runs to 122 residues: Large ribosomal subunit protein uL14 (122 aa).

It belongs to the universal ribosomal protein uL14 family. In terms of assembly, part of the 50S ribosomal subunit. Forms a cluster with proteins L3 and L19. In the 70S ribosome, L14 and L19 interact and together make contacts with the 16S rRNA in bridges B5 and B8.

Binds to 23S rRNA. Forms part of two intersubunit bridges in the 70S ribosome. The protein is Large ribosomal subunit protein uL14 of Geobacter sulfurreducens (strain ATCC 51573 / DSM 12127 / PCA).